The sequence spans 426 residues: Gamma-glutamyl phosphate reductase (426 aa).

Belongs to the gamma-glutamyl phosphate reductase family.

It is found in the cytoplasm. The enzyme catalyses L-glutamate 5-semialdehyde + phosphate + NADP(+) = L-glutamyl 5-phosphate + NADPH + H(+). It participates in amino-acid biosynthesis; L-proline biosynthesis; L-glutamate 5-semialdehyde from L-glutamate: step 2/2. In terms of biological role, catalyzes the NADPH-dependent reduction of L-glutamate 5-phosphate into L-glutamate 5-semialdehyde and phosphate. The product spontaneously undergoes cyclization to form 1-pyrroline-5-carboxylate. The polypeptide is Gamma-glutamyl phosphate reductase (Paracidovorax citrulli (strain AAC00-1) (Acidovorax citrulli)).